The chain runs to 633 residues: Early transcription factor 70 kDa subunit (633 aa).

Residues 32-185 enclose the Helicase ATP-binding domain; sequence RTILDHNESV…SNIISIMSDE (154 aa). ATP is bound at residue 45–52; the sequence is HIMGSGKT. Positions 135–138 match the DEXH box motif; sequence DEAH. Positions 326-505 constitute a Helicase C-terminal domain; it reads KFKYFIDTIG…TLPFDIKKLL (180 aa).

This sequence belongs to the helicase family. VETF subfamily. As to quaternary structure, heterodimer of a 70 kDa and a 82 kDa subunit. Part of the early transcription complex composed of ETF, RAP94, and the DNA-directed RNA polymerase.

It is found in the virion. Functionally, acts with RNA polymerase to initiate transcription from early gene promoters. Is recruited by the RPO-associated protein of 94 kDa (RAP94) to form the early transcription complex, which also contains the core RNA polymerase. ETF heterodimer binds to early gene promoters. This Vertebrata (FPV) protein is Early transcription factor 70 kDa subunit (VETFS).